The following is a 173-amino-acid chain: 3-hydroxydecanoyl-[acyl-carrier-protein] dehydratase (173 aa).

Residue His71 is part of the active site.

It belongs to the thioester dehydratase family. FabA subfamily. In terms of assembly, homodimer.

The protein resides in the cytoplasm. It catalyses the reaction a (3R)-hydroxyacyl-[ACP] = a (2E)-enoyl-[ACP] + H2O. The enzyme catalyses (3R)-hydroxydecanoyl-[ACP] = (2E)-decenoyl-[ACP] + H2O. It carries out the reaction (2E)-decenoyl-[ACP] = (3Z)-decenoyl-[ACP]. It participates in lipid metabolism; fatty acid biosynthesis. Its function is as follows. Necessary for the introduction of cis unsaturation into fatty acids. Catalyzes the dehydration of (3R)-3-hydroxydecanoyl-ACP to E-(2)-decenoyl-ACP and then its isomerization to Z-(3)-decenoyl-ACP. Can catalyze the dehydratase reaction for beta-hydroxyacyl-ACPs with saturated chain lengths up to 16:0, being most active on intermediate chain length. The chain is 3-hydroxydecanoyl-[acyl-carrier-protein] dehydratase from Bradyrhizobium sp. (strain BTAi1 / ATCC BAA-1182).